The sequence spans 1054 residues: Probable sucrose-phosphate synthase 1 (1054 aa).

The span at 104–115 shows a compositional bias: basic and acidic residues; the sequence is RLERERGRREAV. 3 disordered regions span residues 104–125, 674–693, and 708–727; these read RLER…LSEG, LRNE…SDSL, and DGDK…DDRA.

Belongs to the glycosyltransferase 1 family. As to quaternary structure, homodimer or homotetramer.

The catalysed reaction is beta-D-fructose 6-phosphate + UDP-alpha-D-glucose = sucrose 6(F)-phosphate + UDP + H(+). The protein operates within glycan biosynthesis; sucrose biosynthesis; sucrose from D-fructose 6-phosphate and UDP-alpha-D-glucose: step 1/2. Its activity is regulated as follows. Activity is regulated by phosphorylation and moderated by concentration of metabolites and light. Plays a role in photosynthetic sucrose synthesis by catalyzing the rate-limiting step of sucrose biosynthesis from UDP-glucose and fructose- 6-phosphate. Involved in the regulation of carbon partitioning in the leaves of plants. May regulate the synthesis of sucrose and therefore play a major role as a limiting factor in the export of photoassimilates out of the leaf. Plays a role for sucrose availability that is essential for plant growth and fiber elongation. This Craterostigma plantagineum (Blue gem) protein is Probable sucrose-phosphate synthase 1 (SPS1).